We begin with the raw amino-acid sequence, 366 residues long: Palmitoyltransferase ZDHHC2 (366 aa).

Residues 1-15 are Cytoplasmic-facing; the sequence is MAPSGSGGVRRRCRR. The helical transmembrane segment at 16 to 36 threads the bilayer; that stretch reads VLYWIPVVFISLLLGWSYYAY. Residues 37 to 47 lie on the Lumenal side of the membrane; it reads AIQLCIVSMEN. The chain crosses the membrane as a helical span at residues 48-68; the sequence is IGEQVVCLMAYHLLFAMFVWS. At 69 to 169 the chain is on the cytoplasmic side; it reads YWKTIFTLPM…NNCVGFSNYK (101 aa). The DHHC domain maps to 126-176; the sequence is RYCDRCQLIKPDRCHHCSVCDKCILKMDHHCPWVNNCVGFSNYKFFLLFLA. The active-site S-palmitoyl cysteine intermediate is C156. Residues 170 to 190 traverse the membrane as a helical segment; the sequence is FFLLFLAYSLLYCLFIAATDL. Topologically, residues 191-207 are lumenal; that stretch reads QYFIRFWTNGLPDTQAK. A helical transmembrane segment spans residues 208–228; that stretch reads FHIMFLFFAAAMFSVSLSSLF. Topologically, residues 229–366 are cytoplasmic; that stretch reads GYHCWLVSKN…NPALTMENET (138 aa). The span at 297 to 316 shows a compositional bias: polar residues; it reads VNQDPEQPSTPAGLNSTVKN. A disordered region spans residues 297–366; it reads VNQDPEQPST…NPALTMENET (70 aa). The mediates localization to plasma membrane and recycling endosomes stretch occupies residues 298–366; the sequence is NQDPEQPSTP…NPALTMENET (69 aa). Residues 326-336 are compositionally biased toward basic and acidic residues; sequence PLRESQSHLLK. The Non-canonical dileucine endocytic signal motif lies at 334 to 335; sequence LL. Polar residues predominate over residues 337 to 347; sequence DSQTWTESSAN. An NPxY-like endocytic signal motif is present at residues 357 to 360; the sequence is NPAL.

This sequence belongs to the DHHC palmitoyltransferase family. As to quaternary structure, monomer. Homodimer. The monomeric form has a higher catalytic activity. Post-translationally, autopalmitoylated. Expressed in all brain regions.

It is found in the postsynaptic density. The protein localises to the postsynaptic recycling endosome membrane. The protein resides in the cell membrane. It localises to the endoplasmic reticulum membrane. Its subcellular location is the golgi apparatus membrane. The catalysed reaction is L-cysteinyl-[protein] + hexadecanoyl-CoA = S-hexadecanoyl-L-cysteinyl-[protein] + CoA. It carries out the reaction L-cysteinyl-[protein] + tetradecanoyl-CoA = S-tetradecanoyl-L-cysteinyl-[protein] + CoA. The enzyme catalyses L-cysteinyl-[protein] + octadecanoyl-CoA = S-octadecanoyl-L-cysteinyl-[protein] + CoA. Palmitoyltransferase that catalyzes the addition of palmitate onto various protein substrates and is involved in a variety of cellular processes. Has no stringent fatty acid selectivity and in addition to palmitate can also transfer onto target proteins myristate from tetradecanoyl-CoA and stearate from octadecanoyl-CoA. In the nervous system, plays a role in long term synaptic potentiation by palmitoylating AKAP5 through which it regulates protein trafficking from the dendritic recycling endosomes to the plasma membrane and controls both structural and functional plasticity at excitatory synapses. In dendrites, mediates the palmitoylation of DLG4 when synaptic activity decreases and induces synaptic clustering of DLG4 and associated AMPA-type glutamate receptors. Also mediates the de novo and turnover palmitoylation of RGS7BP, a shuttle for Gi/o-specific GTPase-activating proteins/GAPs, promoting its localization to the plasma membrane in response to the activation of G protein-coupled receptors. Through the localization of these GTPase-activating proteins/GAPs, it also probably plays a role in G protein-coupled receptors signaling in neurons. Also probably plays a role in cell adhesion by palmitoylating CD9 and CD151 to regulate their expression and function. Palmitoylates the endoplasmic reticulum protein CKAP4 and regulates its localization to the plasma membrane. Could also palmitoylate LCK and regulate its localization to the plasma membrane. The chain is Palmitoyltransferase ZDHHC2 from Mus musculus (Mouse).